The chain runs to 142 residues: Small ribosomal subunit protein bS6 (142 aa).

Residues 110–142 (NKKPSHAKEKHEKTEHAHSHHTEEAGSKESHSE) are disordered.

The protein belongs to the bacterial ribosomal protein bS6 family.

In terms of biological role, binds together with bS18 to 16S ribosomal RNA. This Helicobacter acinonychis (strain Sheeba) protein is Small ribosomal subunit protein bS6.